Consider the following 556-residue polypeptide: 2-succinyl-5-enolpyruvyl-6-hydroxy-3-cyclohexene-1-carboxylate synthase (556 aa).

Belongs to the TPP enzyme family. MenD subfamily. As to quaternary structure, homodimer. Mg(2+) serves as cofactor. Requires Mn(2+) as cofactor. The cofactor is thiamine diphosphate.

The catalysed reaction is isochorismate + 2-oxoglutarate + H(+) = 5-enolpyruvoyl-6-hydroxy-2-succinyl-cyclohex-3-ene-1-carboxylate + CO2. Its pathway is quinol/quinone metabolism; 1,4-dihydroxy-2-naphthoate biosynthesis; 1,4-dihydroxy-2-naphthoate from chorismate: step 2/7. It functions in the pathway quinol/quinone metabolism; menaquinone biosynthesis. Functionally, catalyzes the thiamine diphosphate-dependent decarboxylation of 2-oxoglutarate and the subsequent addition of the resulting succinic semialdehyde-thiamine pyrophosphate anion to isochorismate to yield 2-succinyl-5-enolpyruvyl-6-hydroxy-3-cyclohexene-1-carboxylate (SEPHCHC). The sequence is that of 2-succinyl-5-enolpyruvyl-6-hydroxy-3-cyclohexene-1-carboxylate synthase from Escherichia coli (strain 55989 / EAEC).